The sequence spans 391 residues: Ribosomal RNA small subunit methyltransferase H (391 aa).

Residues 1 to 23 form a disordered region; it reads MDVDVQDDVQGRAGEGAEERAHD. S-adenosyl-L-methionine is bound by residues 59-61, Asp78, Leu112, Asp126, and Gln133; that span reads GGH. The tract at residues 284-391 is disordered; that stretch reads SSSSAPPDLP…EPGATVERTP (108 aa). Basic and acidic residues predominate over residues 368–380; sequence RTQEFETHPHLEP.

The protein belongs to the methyltransferase superfamily. RsmH family.

The protein resides in the cytoplasm. The enzyme catalyses cytidine(1402) in 16S rRNA + S-adenosyl-L-methionine = N(4)-methylcytidine(1402) in 16S rRNA + S-adenosyl-L-homocysteine + H(+). Functionally, specifically methylates the N4 position of cytidine in position 1402 (C1402) of 16S rRNA. The sequence is that of Ribosomal RNA small subunit methyltransferase H from Kineococcus radiotolerans (strain ATCC BAA-149 / DSM 14245 / SRS30216).